The following is a 651-amino-acid chain: MCSSEECLIDKSWTSEEKCEYIKCNQDSCEGGGYLTWSHYVKCQYNIGVRVILIILGILYLIILFVIMSSIADDFFCPAISGIVSHLRMSESIAGVTFLAFGNGAPDVFSSISSVLTTPKPKADLALGDLFGTSIFVTTVVLAIIIFTKSFKVAIIPTLRDLIFYMTTLAFIVFCFLKFDKIEVWMPATFLGIYGVYVVTVIILGIYRTHRKKRNLKKKNKELEDFLSRPSSAASTTPIFGAMKLKEETISVSALFHFMIGYSQFIKNLTRANLKRTTNNNNNDNKNEKRGIVNLGFSEPYSIPSERKISTIFKQNTFETDLESLESLADLDGSDDEGREEKFGYAHHTVFTSHDQISLVASEIEEIEITTWRSWDWVWDLFNHLKSWPSRDEFSEMNIFIKIVTVIKVVPVFFFKLTVPSNEMSWCKPLFILHCFASIQFALFSIQIITLKPFDGSPGLWLYGLGFSAILAMVAMYFLPLSKEQKYYKEIYSYLGFLMSIAWIYATSNEIVSVVTMIGVVTGLSMELLGLTIMAWSNCIGDIVADIAVVKQGYPKMAMAAAIGGPLFNLLIGFGLPFTIAAAQGKEMELLINPVYRLLMLFLGISLVTTFVALFIQRFTVRRPHAVLLIFIFVVFLIFICLAEFHVLEWN.

A helical membrane pass occupies residues 51–71 (VILIILGILYLIILFVIMSSI). Over 72–91 (ADDFFCPAISGIVSHLRMSE) the chain is Cytoplasmic. Residues 92–112 (SIAGVTFLAFGNGAPDVFSSI) form a helical membrane-spanning segment. Residues 113-126 (SSVLTTPKPKADLA) lie on the Extracellular side of the membrane. The helical transmembrane segment at 127-147 (LGDLFGTSIFVTTVVLAIIIF) threads the bilayer. Over 148 to 161 (TKSFKVAIIPTLRD) the chain is Cytoplasmic. Residues 162–182 (LIFYMTTLAFIVFCFLKFDKI) form a helical membrane-spanning segment. A topological domain (extracellular) is located at residue Glu-183. The chain crosses the membrane as a helical span at residues 184-204 (VWMPATFLGIYGVYVVTVIIL). Residues 205–398 (GIYRTHRKKR…PSRDEFSEMN (194 aa)) lie on the Cytoplasmic side of the membrane. A helical transmembrane segment spans residues 399–419 (IFIKIVTVIKVVPVFFFKLTV). The Extracellular segment spans residues 420-428 (PSNEMSWCK). The helical transmembrane segment at 429–449 (PLFILHCFASIQFALFSIQII) threads the bilayer. Residues 450 to 458 (TLKPFDGSP) lie on the Cytoplasmic side of the membrane. A helical transmembrane segment spans residues 459–479 (GLWLYGLGFSAILAMVAMYFL). At 480–486 (PLSKEQK) the chain is on the extracellular side. The chain crosses the membrane as a helical span at residues 487–507 (YYKEIYSYLGFLMSIAWIYAT). The Cytoplasmic segment spans residues 508-510 (SNE). A helical transmembrane segment spans residues 511 to 531 (IVSVVTMIGVVTGLSMELLGL). Over 532-559 (TIMAWSNCIGDIVADIAVVKQGYPKMAM) the chain is Extracellular. Residues 560–580 (AAAIGGPLFNLLIGFGLPFTI) form a helical membrane-spanning segment. Over 581–595 (AAAQGKEMELLINPV) the chain is Cytoplasmic. A helical membrane pass occupies residues 596–616 (YRLLMLFLGISLVTTFVALFI). The Extracellular segment spans residues 617–626 (QRFTVRRPHA). A helical transmembrane segment spans residues 627-647 (VLLIFIFVVFLIFICLAEFHV). Residues 648 to 651 (LEWN) are Cytoplasmic-facing.

Belongs to the Ca(2+):cation antiporter (CaCA) (TC 2.A.19) family. SLC24A subfamily. As to expression, expressed in the seam cells of the organism. Expression is visible in the seam cells across all larval stages, and expression persists into the adult stage of the organism.

The protein localises to the mitochondrion inner membrane. Inhibited by the sodium/calcium exchanger inhibitor CGP-37157. Functionally, mitochondrial sodium/calcium antiporter that mediates sodium-dependent calcium efflux from mitochondrion, thereby acting as a key regulator of mitochondrion calcium homeostasis. Required for patterning of neural circuits: functions in the same pathway as RAC-dependent effectors of the unc-6/netrin signaling pathway to set left/ right patterning of the VD/DD GABAergic circuit. This Caenorhabditis elegans protein is Mitochondrial sodium/calcium exchanger protein.